The following is a 131-amino-acid chain: Interleukin-13 (131 aa).

Positions Met1–Ala18 are cleaved as a signal peptide. Asn42, Asn53, Asn76, and Asn121 each carry an N-linked (GlcNAc...) asparagine glycan. 2 disulfide bridges follow: Cys52–Cys80 and Cys68–Cys94.

This sequence belongs to the IL-4/IL-13 family. As to quaternary structure, interacts with IL13RA2.

The protein resides in the secreted. In terms of biological role, cytokine that plays important roles in allergic inflammation and immune response to parasite infection. Synergizes with IL2 in regulating interferon-gamma synthesis. Stimulates B-cell proliferation, and activation of eosinophils, basophils, and mast cells. Plays an important role in controlling IL33 activity by modulating the production of transmembrane and soluble forms of interleukin-1 receptor-like 1/IL1RL1. Displays the capacity to antagonize Th1-driven proinflammatory immune response and downregulates synthesis of many proinflammatory cytokines including IL1, IL6, IL10, IL12 and TNF-alpha through a mechanism that partially involves suppression of NF-kappa-B. Also functions on nonhematopoietic cells, including endothelial cells where it induces vascular cell adhesion protein 1/VCAM1, which is important in the recruitment of eosinophils. Exerts its biological effects through its receptors which comprises the IL4R chain and the IL13RA1 chain, to activate JAK1 and TYK2, leading to the activation of STAT6. Aside from IL13RA1, another receptor IL13RA2 acts as a high affinity decoy for IL13 and mediates internalization and depletion of extracellular IL13. The sequence is that of Interleukin-13 (Il13) from Rattus norvegicus (Rat).